A 246-amino-acid polypeptide reads, in one-letter code: uncharacterized protein (246 aa).

A signal peptide spans 1-24; that stretch reads MGAPLRHCLLVAAALSLGCGVAAA. 2 consecutive transmembrane segments (helical) span residues 71 to 91 and 104 to 124; these read YYLG…IGLV and FTCA…AGGA.

The protein resides in the cell membrane. This is an uncharacterized protein from Mycobacterium tuberculosis (strain ATCC 25618 / H37Rv).